A 173-amino-acid chain; its full sequence is Shikimate kinase (173 aa).

14-19 (GAGKST) is a binding site for ATP. Residue serine 18 coordinates Mg(2+). Positions 36, 60, and 82 each coordinate substrate. Arginine 120 provides a ligand contact to ATP. Arginine 140 provides a ligand contact to substrate. Glutamine 157 is an ATP binding site.

The protein belongs to the shikimate kinase family. Monomer. Mg(2+) serves as cofactor.

It is found in the cytoplasm. It catalyses the reaction shikimate + ATP = 3-phosphoshikimate + ADP + H(+). The protein operates within metabolic intermediate biosynthesis; chorismate biosynthesis; chorismate from D-erythrose 4-phosphate and phosphoenolpyruvate: step 5/7. Its function is as follows. Catalyzes the specific phosphorylation of the 3-hydroxyl group of shikimic acid using ATP as a cosubstrate. The protein is Shikimate kinase of Buchnera aphidicola subsp. Acyrthosiphon pisum (strain APS) (Acyrthosiphon pisum symbiotic bacterium).